Here is a 61-residue protein sequence, read N- to C-terminus: Probable tautomerase lin2709 (61 aa).

Pro-2 acts as the Proton acceptor; via imino nitrogen in catalysis.

Belongs to the 4-oxalocrotonate tautomerase family.

The polypeptide is Probable tautomerase lin2709 (Listeria innocua serovar 6a (strain ATCC BAA-680 / CLIP 11262)).